Consider the following 291-residue polypeptide: ATP synthase gamma chain (291 aa).

This sequence belongs to the ATPase gamma chain family. F-type ATPases have 2 components, CF(1) - the catalytic core - and CF(0) - the membrane proton channel. CF(1) has five subunits: alpha(3), beta(3), gamma(1), delta(1), epsilon(1). CF(0) has three main subunits: a, b and c.

The protein resides in the cell inner membrane. Functionally, produces ATP from ADP in the presence of a proton gradient across the membrane. The gamma chain is believed to be important in regulating ATPase activity and the flow of protons through the CF(0) complex. This chain is ATP synthase gamma chain, found in Neisseria gonorrhoeae (strain ATCC 700825 / FA 1090).